The following is a 461-amino-acid chain: GTPase Der (461 aa).

EngA-type G domains are found at residues 2-164 (QKII…EDDV) and 197-368 (IRVG…KNFT). GTP contacts are provided by residues 8–15 (GKPNVGKS), 55–59 (DSGGL), 116–119 (NKID), 203–210 (GRVNVGKS), 250–254 (DTAGI), and 314–317 (NKWD). A KH-like domain is found at 369-453 (QKIQTSKLNE…PIVLAPKKRG (85 aa)).

This sequence belongs to the TRAFAC class TrmE-Era-EngA-EngB-Septin-like GTPase superfamily. EngA (Der) GTPase family. In terms of assembly, associates with the 50S ribosomal subunit.

GTPase that plays an essential role in the late steps of ribosome biogenesis. The protein is GTPase Der of Campylobacter curvus (strain 525.92).